The chain runs to 782 residues: MAKQGKNKVSKPRKPPTLKQKLKKESKVVKAKDLQWKLVDIPDNLGDYEGFYGLEEIDGVDVQIVNGKAEFIVRDNGKVENKSKKEETNENGENNMDVEDNETPEVEDEKPTEQEEEEEEEEEEEEEEEEEEEEEEFAGFEDDENNQEDANTSERVSNNDKDDKLAESNDELNAVSFANLDLPLPDDNEINLPNWQEGDLGSSISAYTLYGLSQLDFKKPTPIQKETIPIALSGKDVIGKATTGSGKTLAYGIPILEKYIQSLNLIKQNNKDKKINHPTGIIFAPTRELAHQVVDHLNKLAKYSPLSTRGIVSITGGLSIQKQQRLLRHGPGIIVATPGRMLELVQGDSELAKRLASIDIIVLDEADRLLQDGHFDEFEKILELFGKNRPKSKSIEWKWQTLVFSATFSRDLFRKLDRHQKGKSSSLMGNDEIVQLLNEKLKFKDKKPTLVDANPKEIVSGQITEALVECGPTERDLYLYYFLLMYKGSTLVFANSIDSVKRLVPLLNNLNIPAFSIHSSMIQKQRLRALEKFKEASQKNEVAVLVASDVAARGLDIPNIDHVVHYHLPRSADVYIHRSGRTARAGKEGVSVMFCSPQEASGPLRKLRRLVAGNSNKESRLNMHNDVKLLPIEMDLVSQIKPRVEISSKLADASISSTATRKEDSWVKQAAEDLGLDDLSGLEDFEDDIIKKQRKRKEGKMLSKDETKALKYELKTLLANPIKKNTRKSYITSGLQNLAHQMVTGAHHDDVLGHEKVNALSDLKGSKNKNKKIEKKRISKKK.

Residues M1–L22 show a composition bias toward basic residues. 2 disordered regions span residues M1–K24 and F71–K164. Residues F71 to T88 show a composition bias toward basic and acidic residues. Over residues M96 to Q147 the composition is skewed to acidic residues. A Q motif motif is present at residues E197 to K225. One can recognise a Helicase ATP-binding domain in the interval I228 to S426. Residue A241–T248 participates in ATP binding. The DEAD box signature appears at D364–D367. The region spanning Y478 to D635 is the Helicase C-terminal domain. The disordered stretch occupies residues D762–K782. A compositionally biased stretch (basic residues) spans S766–K782.

The protein belongs to the DEAD box helicase family. DDX24/MAK5 subfamily.

The protein localises to the nucleus. It localises to the nucleolus. The enzyme catalyses ATP + H2O = ADP + phosphate + H(+). Functionally, ATP-binding RNA helicase involved in the biogenesis of 60S ribosomal subunits and is required for the normal formation of 25S and 5.8S rRNAs. This Candida albicans (strain SC5314 / ATCC MYA-2876) (Yeast) protein is ATP-dependent RNA helicase MAK5 (MAK5).